The following is a 230-amino-acid chain: N-(5'-phosphoribosyl)anthranilate isomerase (230 aa).

Belongs to the TrpF family.

It catalyses the reaction N-(5-phospho-beta-D-ribosyl)anthranilate = 1-(2-carboxyphenylamino)-1-deoxy-D-ribulose 5-phosphate. Its pathway is amino-acid biosynthesis; L-tryptophan biosynthesis; L-tryptophan from chorismate: step 3/5. This chain is N-(5'-phosphoribosyl)anthranilate isomerase, found in Thermosynechococcus vestitus (strain NIES-2133 / IAM M-273 / BP-1).